The primary structure comprises 329 residues: Phenylalanine--tRNA ligase alpha subunit (329 aa).

E254 lines the Mg(2+) pocket.

This sequence belongs to the class-II aminoacyl-tRNA synthetase family. Phe-tRNA synthetase alpha subunit type 1 subfamily. Tetramer of two alpha and two beta subunits. Mg(2+) serves as cofactor.

The protein resides in the cytoplasm. The enzyme catalyses tRNA(Phe) + L-phenylalanine + ATP = L-phenylalanyl-tRNA(Phe) + AMP + diphosphate + H(+). The sequence is that of Phenylalanine--tRNA ligase alpha subunit from Actinobacillus succinogenes (strain ATCC 55618 / DSM 22257 / CCUG 43843 / 130Z).